Here is a 479-residue protein sequence, read N- to C-terminus: Serralysin C (479 aa).

The propeptide occupies 1-17 (MGKNLSLRQDDAQHALS). Position 188 (histidine 188) interacts with Zn(2+). Glutamate 189 is an active-site residue. Zn(2+) contacts are provided by histidine 192 and tyrosine 228. Ca(2+)-binding residues include arginine 265, glycine 267, aspartate 297, glycine 299, glycine 300, aspartate 302, threonine 339, glutamate 341, glycine 346, glycine 348, aspartate 350, asparagine 355, alanine 357, asparagine 359, glycine 363, glycine 364, alanine 365, glycine 366, aspartate 368, glycine 372, glycine 373, glycine 375, aspartate 377, glycine 381, glycine 382, alanine 383, glycine 384, aspartate 386, aspartate 395, aspartate 402, and aspartate 412. Hemolysin-type calcium-binding repeat units lie at residues 344–361 (IGGSGNDILVGNSADNIL), 362–379 (QGGAGNDVLYGGAGADTL), and 380–397 (YGGAGRDTFVYGSGQDST).

Belongs to the peptidase M10B family. It depends on Ca(2+) as a cofactor. Zn(2+) serves as cofactor.

The protein localises to the secreted. The enzyme catalyses Preferential cleavage of bonds with hydrophobic residues in P1'.. The chain is Serralysin C (prtC) from Dickeya chrysanthemi (Pectobacterium chrysanthemi).